The sequence spans 505 residues: Catalase (505 aa).

The tract at residues 1–25 (MSQQDKKLTGVFGHPVSDRENSMTA) is disordered. Residues histidine 56 and asparagine 129 contribute to the active site. Tyrosine 339 serves as a coordination point for heme.

It belongs to the catalase family. As to quaternary structure, homodimer. Heme serves as cofactor.

It catalyses the reaction 2 H2O2 = O2 + 2 H2O. Its function is as follows. Decomposes hydrogen peroxide into water and oxygen; serves to protect cells from the toxic effects of hydrogen peroxide. This chain is Catalase (katA), found in Staphylococcus aureus (strain MSSA476).